The sequence spans 88 residues: UPF0335 protein Mnod_5968 (88 aa).

Belongs to the UPF0335 family.

This is UPF0335 protein Mnod_5968 from Methylobacterium nodulans (strain LMG 21967 / CNCM I-2342 / ORS 2060).